We begin with the raw amino-acid sequence, 136 residues long: Large ribosomal subunit protein uL16 (136 aa).

The protein belongs to the universal ribosomal protein uL16 family. As to quaternary structure, part of the 50S ribosomal subunit.

Binds 23S rRNA and is also seen to make contacts with the A and possibly P site tRNAs. This is Large ribosomal subunit protein uL16 from Rickettsia rickettsii (strain Iowa).